Here is a 165-residue protein sequence, read N- to C-terminus: Myosin regulatory light chain 2A, cardiac muscle isoform (165 aa).

The residue at position 2 (Ala2) is a N,N,N-trimethylalanine. EF-hand domains are found at residues 24 to 59 (AQIQ…LGRL), 94 to 128 (DPEE…QEGR), and 129 to 164 (FSQE…GEEK). Ca(2+) is bound by residues Asp37, Asn39, Asp41, and Asp48.

As to quaternary structure, myosin is a hexamer of 2 heavy chains and 4 light chains. The N-terminus is blocked. N,N,N-trimethylalanine, found in other myosin light chains would not have been detected in the N-terminal tryptic peptide in PubMed:7319048 because it would remain trimethylated and ninhydrin negative after hydrolysis.

The chain is Myosin regulatory light chain 2A, cardiac muscle isoform from Gallus gallus (Chicken).